A 149-amino-acid chain; its full sequence is Calmodulin-2 (149 aa).

An N-acetylalanine modification is found at Ala-2. 4 EF-hand domains span residues 8–43 (EQIA…LGQN), 44–79 (PTEA…KMKD), 81–116 (DSEE…LGEK), and 117–149 (LTDE…MMAK). Ca(2+)-binding residues include Asp-21, Asp-23, Asp-25, Cys-27, Glu-32, Asp-57, Asp-59, Asn-61, Thr-63, Glu-68, Asp-94, Asp-96, Asn-98, and Glu-105. Lys-116 is modified (N6,N6,N6-trimethyllysine). Residues Asp-130, Asp-132, Asp-134, Gln-136, and Glu-141 each contribute to the Ca(2+) site.

The protein belongs to the calmodulin family.

Calmodulin mediates the control of a large number of enzymes, ion channels and other proteins by Ca(2+). Among the enzymes to be stimulated by the calmodulin-Ca(2+) complex are a number of protein kinases and phosphatases. The protein is Calmodulin-2 (CAM2) of Oryza sativa subsp. indica (Rice).